The sequence spans 929 residues: Pyruvate dehydrogenase E1 component (929 aa).

Lys375 participates in a covalent cross-link: Isoglutamyl lysine isopeptide (Lys-Gln) (interchain with Q-Cter in protein Pup).

As to quaternary structure, homodimer. Part of the PDH complex, consisting of multiple copies of AceE (E1), DlaT (E2) and Lpd (E3). The cofactor is Mg(2+). Thiamine diphosphate serves as cofactor.

It catalyses the reaction N(6)-[(R)-lipoyl]-L-lysyl-[protein] + pyruvate + H(+) = N(6)-[(R)-S(8)-acetyldihydrolipoyl]-L-lysyl-[protein] + CO2. Its function is as follows. Component of the pyruvate dehydrogenase (PDH) complex, that catalyzes the overall conversion of pyruvate to acetyl-CoA and CO(2). AceE has reductase activity with pyruvate but does not react with 2-oxoglutarate. The protein is Pyruvate dehydrogenase E1 component (aceE) of Mycolicibacterium smegmatis (strain ATCC 700084 / mc(2)155) (Mycobacterium smegmatis).